A 169-amino-acid chain; its full sequence is Succinate dehydrogenase cytochrome b560 subunit, mitochondrial (169 aa).

Residues 1–29 constitute a mitochondrion transit peptide; sequence MAALLLRHVGRHCLRAHLSPQLCIRNAVP. The Mitochondrial matrix portion of the chain corresponds to 30-62; the sequence is LGTTAKEEMERFWNKNLGSNRPLSPHITIYRWS. Residues 63–92 form a helical membrane-spanning segment; that stretch reads LPMAMSICHRGTGIALSAGVSLFGLSALLL. Over 93-112 the chain is Mitochondrial intermembrane; sequence PGNFESHLELVKSLCLGPTL. The helical transmembrane segment at 113–137 threads the bilayer; the sequence is IYTAKFGIVFPLMYHTWNGIRHLIW. A heme b-binding site is contributed by His-127. At 138 to 144 the chain is on the mitochondrial matrix side; it reads DLGKGLT. A helical transmembrane segment spans residues 145–166; that stretch reads IPQLTQSGVVVLILTVLSSVGL. Residues 167–169 lie on the Mitochondrial intermembrane side of the membrane; sequence AAM.

This sequence belongs to the cytochrome b560 family. In terms of assembly, component of complex II composed of four subunits: the flavoprotein (FP) SDHA, iron-sulfur protein (IP) SDHB, and a cytochrome b560 composed of SDHC and SDHD. It depends on heme b as a cofactor. As to expression, detected in heart muscle (at protein level).

It is found in the mitochondrion inner membrane. It functions in the pathway carbohydrate metabolism; tricarboxylic acid cycle. Functionally, membrane-anchoring subunit of succinate dehydrogenase (SDH) that is involved in complex II of the mitochondrial electron transport chain and is responsible for transferring electrons from succinate to ubiquinone (coenzyme Q). SDH also oxidizes malate to the non-canonical enol form of oxaloacetate, enol-oxaloacetate. Enol-oxaloacetate, which is a potent inhibitor of the succinate dehydrogenase activity, is further isomerized into keto-oxaloacetate. The sequence is that of Succinate dehydrogenase cytochrome b560 subunit, mitochondrial (SDHC) from Sus scrofa (Pig).